A 43-amino-acid chain; its full sequence is uncharacterized protein (43 aa).

This is an uncharacterized protein from Bacillus subtilis (strain 168).